The sequence spans 374 residues: MPADMKSGASDPRPSGERDKALNLVLGQIERNFGKGSIMRLGDASRMRVETISTGALTLDLALGGGYPKGRVVEIYGPESSGKTTLTLHAIAEVQKRGGVAAFVDAEHALDPVYAASLGVDVENLLVSQPDTGEMALEIVDQLVRSAAVDLVVVDSVAALTPRAEIEGEMGDLAVGAQARLMSQAMRKITGNIGKSGCTVIFLNQLRLKIGVTYGNPETTTGGNALKFYASVRLDIRRIQTLKKGTEEFGIRAKVKVAKNKVAPPFRIAEFDILFGRGISTLGCLLDLAEETGVVVRKGAWYSYEGDNIGQGRDNTISWMEENPDATATIETLVRQKLTEGSEVKANSMRPLAAAAKTAAADKSAPAKASEAAA.

77-84 (GPESSGKT) is a binding site for ATP. Residues 355–374 (AAKTAAADKSAPAKASEAAA) are disordered.

Belongs to the RecA family.

The protein localises to the cytoplasm. Its function is as follows. Can catalyze the hydrolysis of ATP in the presence of single-stranded DNA, the ATP-dependent uptake of single-stranded DNA by duplex DNA, and the ATP-dependent hybridization of homologous single-stranded DNAs. It interacts with LexA causing its activation and leading to its autocatalytic cleavage. The polypeptide is Protein RecA (Synechococcus sp. (strain CC9605)).